The sequence spans 173 residues: Probable calcium-binding protein CML14 (173 aa).

EF-hand domains are found at residues 21–56 (SQLK…LGLR), 57–92 (PTGD…VLTT), 97–132 (VDQA…LGQP), and 133–168 (LTFE…SALD). Ca(2+) is bound by residues Asp34, Asn36, Asp38, Ser40, Glu45, Asp70, Asn72, Asn74, Ser76, Glu81, Asp110, Asp112, Asn114, Glu121, Asp146, Asp148, Asp150, and Glu157.

In terms of biological role, potential calcium sensor. This Oryza sativa subsp. japonica (Rice) protein is Probable calcium-binding protein CML14 (CML14).